Here is a 137-residue protein sequence, read N- to C-terminus: MLQPKKTKFRKQFKGRIHGTAKGGTDLNFGSYGLKALEPERVTARQIEAARRAITREMKRQGRVWIRIFPDVPVTQKPTEVRMGSGKGSPEYWAARVHPGRVMFEIDGVAEDIAREALRLGAAKLPVRTRFIQRIAD.

This sequence belongs to the universal ribosomal protein uL16 family. As to quaternary structure, part of the 50S ribosomal subunit.

Functionally, binds 23S rRNA and is also seen to make contacts with the A and possibly P site tRNAs. The protein is Large ribosomal subunit protein uL16 of Methylobacterium sp. (strain 4-46).